A 319-amino-acid polypeptide reads, in one-letter code: Aminoimidazole riboside kinase (319 aa).

Residues aspartate 16, glycine 31, and tyrosine 101 each contribute to the 5-amino-1-(beta-D-ribosyl)imidazole site. 158–160 (DVN) contributes to the ATP binding site. Arginine 162 is a 5-amino-1-(beta-D-ribosyl)imidazole binding site. K(+) contacts are provided by alanine 180, alanine 181, and alanine 183. The ATP site is built by lysine 187 and glutamate 192. Residue glycine 213 coordinates K(+). Position 220 to 225 (220 to 225 (SLGADG)) interacts with ATP. Residues aspartate 246 and threonine 248 each coordinate K(+). Residue aspartate 252 participates in 5-amino-1-(beta-D-ribosyl)imidazole binding. Catalysis depends on aspartate 252, which acts as the Proton acceptor. Asparagine 281 is an ATP binding site. K(+)-binding residues include alanine 287, alanine 290, and glycine 292.

It belongs to the carbohydrate kinase PfkB family. Homodimer.

The enzyme catalyses 5-amino-1-(beta-D-ribosyl)imidazole + ATP = 5-amino-1-(5-phospho-beta-D-ribosyl)imidazole + ADP + H(+). Its activity is regulated as follows. Potassium may regulate kinase activity. Its function is as follows. Phosphorylates 5-amino-1-(beta-D-ribosyl)imidazole (AIRs) to form 5-amino-1-(5-phospho-beta-D-ribosyl)imidazole (AIR), an important intermediate in the purine and thiamine biosynthetic pathways. It allows the use of exogenous aminoimidazole riboside (AIRs) to satisfy the cellular requirement for purines and thiamine. The protein is Aminoimidazole riboside kinase of Salmonella typhimurium (strain LT2 / SGSC1412 / ATCC 700720).